The primary structure comprises 362 residues: Class I histocompatibility antigen, Gogo-B*0101 alpha chain (362 aa).

The signal sequence occupies residues 1–24; it reads MRVTAPRTLLLLLSAALALTETWA. An alpha-1 region spans residues 25-114; the sequence is GSHSMRYFDT…ALRYYNQSEA (90 aa). Residues 25–308 are Extracellular-facing; that stretch reads GSHSMRYFDT…EPSSQSTIPI (284 aa). N-linked (GlcNAc...) asparagine glycosylation is present at N110. Residues 115 to 206 are alpha-2; the sequence is GSHTIQRMFG…ENGRETLQRA (92 aa). Disulfide bonds link C125/C188 and C227/C283. The interval 207-298 is alpha-3; that stretch reads DTPKTHVTHH…GLPKPLTLRW (92 aa). The Ig-like C1-type domain maps to 209–295; it reads PKTHVTHHPI…QHEGLPKPLT (87 aa). Positions 299-308 are connecting peptide; sequence EPSSQSTIPI. A helical transmembrane segment spans residues 309–332; it reads VGIVAGLAVLAVVVIGAVVTAVIC. Topologically, residues 333–362 are cytoplasmic; that stretch reads RRKSSGGKGGSYSQAASSDSAQGSDVSLTA. Positions 335–362 are disordered; that stretch reads KSSGGKGGSYSQAASSDSAQGSDVSLTA. The span at 343–362 shows a compositional bias: low complexity; it reads SYSQAASSDSAQGSDVSLTA. Phosphoserine is present on residues S356 and S359.

Belongs to the MHC class I family. As to quaternary structure, heterodimer of an alpha chain and a beta chain (beta-2-microglobulin).

It localises to the membrane. Its function is as follows. Involved in the presentation of foreign antigens to the immune system. The sequence is that of Class I histocompatibility antigen, Gogo-B*0101 alpha chain from Gorilla gorilla gorilla (Western lowland gorilla).